The following is a 214-amino-acid chain: N-(5'-phosphoribosyl)anthranilate isomerase (214 aa).

This sequence belongs to the TrpF family.

The catalysed reaction is N-(5-phospho-beta-D-ribosyl)anthranilate = 1-(2-carboxyphenylamino)-1-deoxy-D-ribulose 5-phosphate. It participates in amino-acid biosynthesis; L-tryptophan biosynthesis; L-tryptophan from chorismate: step 3/5. This is N-(5'-phosphoribosyl)anthranilate isomerase from Haloarcula marismortui (strain ATCC 43049 / DSM 3752 / JCM 8966 / VKM B-1809) (Halobacterium marismortui).